The primary structure comprises 215 residues: Phosphoribosylglycinamide formyltransferase (215 aa).

(6R)-10-formyltetrahydrofolate-binding positions include Arg-74, 99-102, and Asn-116; that span reads MRIL. The active-site Proton donor is His-118.

Belongs to the GART family.

It catalyses the reaction N(1)-(5-phospho-beta-D-ribosyl)glycinamide + (6R)-10-formyltetrahydrofolate = N(2)-formyl-N(1)-(5-phospho-beta-D-ribosyl)glycinamide + (6S)-5,6,7,8-tetrahydrofolate + H(+). Its pathway is purine metabolism; IMP biosynthesis via de novo pathway; N(2)-formyl-N(1)-(5-phospho-D-ribosyl)glycinamide from N(1)-(5-phospho-D-ribosyl)glycinamide (10-formyl THF route): step 1/1. Catalyzes the transfer of a formyl group from 10-formyltetrahydrofolate to 5-phospho-ribosyl-glycinamide (GAR), producing 5-phospho-ribosyl-N-formylglycinamide (FGAR) and tetrahydrofolate. The protein is Phosphoribosylglycinamide formyltransferase of Mycobacterium tuberculosis (strain CDC 1551 / Oshkosh).